The primary structure comprises 245 residues: Endogenous retrovirus group K member 5 Env polyprotein (245 aa).

The interval 1–245 (MVTPVTWMDN…TLEFGLEIKL (245 aa)) is truncated surface protein.

Belongs to the beta type-B retroviral envelope protein family. HERV class-II K(HML-2) env subfamily. Expressed in lung, placenta, testis, peripheral blood lymphocytes, and teratocarcinoma cell lines.

The protein localises to the virion. In terms of biological role, retroviral envelope proteins mediate receptor recognition and membrane fusion during early infection. Endogenous envelope proteins may have kept, lost or modified their original function during evolution. The polypeptide is Endogenous retrovirus group K member 5 Env polyprotein (ERVK-5) (Homo sapiens (Human)).